We begin with the raw amino-acid sequence, 1379 residues long: DNA-directed RNA polymerase subunit beta'' (1379 aa).

Zn(2+) contacts are provided by Cys220, Cys291, Cys298, and Cys301.

This sequence belongs to the RNA polymerase beta' chain family. RpoC2 subfamily. In terms of assembly, in plastids the minimal PEP RNA polymerase catalytic core is composed of four subunits: alpha, beta, beta', and beta''. When a (nuclear-encoded) sigma factor is associated with the core the holoenzyme is formed, which can initiate transcription. It depends on Zn(2+) as a cofactor.

It is found in the plastid. The catalysed reaction is RNA(n) + a ribonucleoside 5'-triphosphate = RNA(n+1) + diphosphate. Functionally, DNA-dependent RNA polymerase catalyzes the transcription of DNA into RNA using the four ribonucleoside triphosphates as substrates. This chain is DNA-directed RNA polymerase subunit beta'', found in Cuscuta reflexa (Southern Asian dodder).